The following is a 105-amino-acid chain: ATP-dependent Clp protease adapter protein ClpS (105 aa).

The protein belongs to the ClpS family. In terms of assembly, binds to the N-terminal domain of the chaperone ClpA.

Involved in the modulation of the specificity of the ClpAP-mediated ATP-dependent protein degradation. The sequence is that of ATP-dependent Clp protease adapter protein ClpS from Prochlorococcus marinus (strain MIT 9515).